The chain runs to 313 residues: Putative S-adenosyl-L-methionine-dependent methyltransferase MAP_3563 (313 aa).

Residues aspartate 139 and 168-169 (DL) contribute to the S-adenosyl-L-methionine site.

Belongs to the UPF0677 family.

Functionally, exhibits S-adenosyl-L-methionine-dependent methyltransferase activity. In Mycolicibacterium paratuberculosis (strain ATCC BAA-968 / K-10) (Mycobacterium paratuberculosis), this protein is Putative S-adenosyl-L-methionine-dependent methyltransferase MAP_3563.